Consider the following 873-residue polypeptide: ASGQLHRPQPQEHTSTSAAAGTWRLTQASESRHRLPHCSAAPSHQDHSAMGFGPELWCPKGHTELLRLQDSELRLLELMKKWMSQRAKSDREYAGMLHHMFSQLEKQEGLGHLRATDHSSQIGESWWVLASQTETLSQTLRRHAEELAAGPLAKLSILIRDKQQLRKVFSEQWQQLSQEYAWTTQQEVEKLKAQYRSLVRDSTQAKRKYQEASKDKEREKAKEKYVRSLSKLYALHNQYVLAVQAAALHHHHHYQRALPTLHESLYSLQQEMVLVLKEILGEYCSITSLVQEDVLAIHQKVAHAVEMIDPATEYSSFVQCHRYDSEVPPAVTFDESLLEEAENLEPGELQLNELTIESVQHSLTSIEEELLASRKAVSSKEQRVWELQVELRGEELALSPGERVHLLGKRQGLREAQQQLQGLVCAQAKLQAQRDMLANKLAELGSEEPPPALPLQEDRQSARSTDQERSGVTALKTIKNHISGIFSPRFSLPPPVPLIPEVQKPLCQQAWYHGAIPRSEVQELLKYSGDFLVRESQGKQEYVLSVLWDGQPRHFIIQAADNLYRLEDDGLPTIPLLIDHLLQSQRPITRKSGIVLTRAVLKDKWVLNHEDVLLGERIGRGNFGEVFSGRLRADNTPVAVKSCRETLPPELKAKFLQEARILKQCNHPNIVRLIGVCTQKQPIYIVMELVQGGDFLSFLRSKGPRLKMKKLIKMMENAAAGMEYLESKHCIHRDLAARNCLVTEKNTLKISDFGMSRQEEDGVYASTGGMKQIPVKWTAPEALNYGWYSSESDVWSFGILLWEAFSLGAVPYANLSNQQTREAIEQGVRLEPPEQCPEDVYRLMQRCWEYDPHRRPSFGAVHQDLIAIRKRHR.

The segment at 1–46 (ASGQLHRPQPQEHTSTSAAAGTWRLTQASESRHRLPHCSAAPSHQD) is disordered. The span at 11-29 (QEHTSTSAAAGTWRLTQAS) shows a compositional bias: polar residues. The F-BAR domain maps to 50-313 (MGFGPELWCP…AVEMIDPATE (264 aa)). Residues 445-471 (GSEEPPPALPLQEDRQSARSTDQERSG) are disordered. The segment covering 456 to 469 (QEDRQSARSTDQER) has biased composition (basic and acidic residues). The region spanning 511 to 600 (WYHGAIPRSE…KSGIVLTRAV (90 aa)) is the SH2 domain. One can recognise a Protein kinase domain in the interval 612–865 (VLLGERIGRG…PSFGAVHQDL (254 aa)). ATP contacts are provided by residues 618-626 (IGRGNFGEV) and K641. D734 serves as the catalytic Proton acceptor. The residue at position 764 (Y764) is a Phosphotyrosine; by autocatalysis.

This sequence belongs to the protein kinase superfamily. Tyr protein kinase family. Fes/fps subfamily.

It carries out the reaction L-tyrosyl-[protein] + ATP = O-phospho-L-tyrosyl-[protein] + ADP + H(+). This Gallus gallus (Chicken) protein is Tyrosine-protein kinase transforming protein Fps (V-FPS).